The sequence spans 104 residues: L-rhamnose mutarotase (104 aa).

Tyr-18 serves as a coordination point for substrate. Catalysis depends on His-22, which acts as the Proton donor. Substrate contacts are provided by residues Tyr-41 and 76 to 77 (WW).

Belongs to the rhamnose mutarotase family. In terms of assembly, homodimer.

The protein localises to the cytoplasm. It carries out the reaction alpha-L-rhamnose = beta-L-rhamnose. It participates in carbohydrate metabolism; L-rhamnose metabolism. Its function is as follows. Involved in the anomeric conversion of L-rhamnose. This is L-rhamnose mutarotase from Jannaschia sp. (strain CCS1).